Reading from the N-terminus, the 2128-residue chain is Non-reducing polyketide synthase albA (2128 aa).

Positions 8 to 244 are N-terminal acylcarrier protein transacylase domain (SAT); sequence YLFGDQTSDI…VKAPIHGPYH (237 aa). The 432-residue stretch at 375–806 folds into the Ketosynthase family 3 (KS3) domain; the sequence is NSKIAIIGMS…GGNTALLLED (432 aa). Active-site for beta-ketoacyl synthase activity residues include cysteine 547, histidine 682, and histidine 724. Residues 912–1232 form a malonyl-CoA:ACP transacylase (MAT) domain region; sequence FVFTGQGAQY…LASLHLAGID (321 aa). Catalysis depends on serine 1001, which acts as the For acyl/malonyl transferase activity. Positions 1286–1425 are N-terminal hotdog fold; the sequence is HEYLTTAAQK…CTVRFFDCAA (140 aa). The PKS/mFAS DH domain maps to 1286-1598; that stretch reads HEYLTTAAQK…FQALSRKILD (313 aa). The segment at 1290–1603 is product template (PT) domain; sequence TTAAQKVIET…RKILDTVLPP (314 aa). Histidine 1326 (proton acceptor; for dehydratase activity) is an active-site residue. The interval 1452–1598 is C-terminal hotdog fold; it reads DAHRLGRGMV…FQALSRKILD (147 aa). Aspartate 1511 acts as the Proton donor; for dehydratase activity in catalysis. The Carrier 1 domain maps to 1618–1695; the sequence is PSAPSLVKRA…DFKQFLAPMS (78 aa). Serine 1655 carries the post-translational modification O-(pantetheine 4'-phosphoryl)serine. The tract at residues 1695 to 1740 is disordered; the sequence is SQGEASDGSTSDPESSSSFNGGSSTDESSAGSPVSSPPNEKVTQVE. Residues 1700-1723 are compositionally biased toward low complexity; that stretch reads SDGSTSDPESSSSFNGGSSTDESS. Residues 1724-1740 are compositionally biased toward polar residues; the sequence is AGSPVSSPPNEKVTQVE. The Carrier 2 domain occupies 1739 to 1816; it reads VEQHATIKEI…DVEDALGLKP (78 aa). At serine 1776 the chain carries O-(pantetheine 4'-phosphoryl)serine. Positions 1854-2126 are claisen cyclase domain; the sequence is SPHPRSTSIL…ELGSFIGNAM (273 aa). The active-site For Claisen cyclase activity is serine 1944.

It carries out the reaction 6 malonyl-CoA + acetyl-CoA + 6 H(+) = naphtopyrone YWA1 + 6 CO2 + 7 CoA + H2O. Its pathway is secondary metabolite biosynthesis. In terms of biological role, non-reducing polyketide synthase; part of the gene cluster that mediates the biosynthesis of aurasperone B, a dimeric gamma-naphthopyrone. The first step in the biosynthesis of aurasperone B is the production of gamma-naphthopyrone precursor YWA1 by the non-reducing polyketide synthase albA, via condensation of one acetyl-CoA starter unit with 6 malonyl-CoA units. YWA1 is then methylated by aunE at position C-6 to yield foncesin which is further methylated at position C-8 by aunD to produce fonsecin B. A key enzyme in the biosynthetic pathway is the cytochrome P450 monooxygenase aunB which catalyzes the oxidative dimerization of fonsecin B to aurasperone B. AunB also catalyzes the oxidative dimerization of rubrofusarin B into aurasperone A. The polypeptide is Non-reducing polyketide synthase albA (Aspergillus niger (strain ATCC 1015 / CBS 113.46 / FGSC A1144 / LSHB Ac4 / NCTC 3858a / NRRL 328 / USDA 3528.7)).